Reading from the N-terminus, the 367-residue chain is THO complex subunit 6 (367 aa).

WD repeat units lie at residues 23–67, 88–129, 157–196, 199–240, 243–283, 285–322, and 324–363; these read IETR…SQSA, AHEG…ESDV, SPMP…IKMT, GHSD…KVIG, DKKS…CVQT, PIPA…LSQI, and CAPC…CTFR.

It belongs to the WD repeat THOC6 family. Component of the THO complex, which is composed of THO1, THO2, THO3, THO5, THO6 and THO7. Interacts with ABI5, DDB1A and DWA2.

Its subcellular location is the nucleus. Its pathway is protein modification; protein ubiquitination. Its function is as follows. Acts as a component of the THO subcomplex of the TREX complex which is thought to couple mRNA transcription, processing and nuclear export. Functionally, component of the CUL4-RBX1-DDB1-DWA1/DWA2 E3 ubiquitin-protein ligase complex that acts as a negative regulator in abscisic acid (ABA) signaling. May function as the substrate recognition module within this complex leading to ABI5 degradation. Functionally redundant with DWA2. The protein is THO complex subunit 6 (THO6) of Arabidopsis thaliana (Mouse-ear cress).